Here is a 498-residue protein sequence, read N- to C-terminus: ATP synthase subunit beta, chloroplastic (498 aa).

172–179 (GGAGVGKT) contacts ATP.

This sequence belongs to the ATPase alpha/beta chains family. F-type ATPases have 2 components, CF(1) - the catalytic core - and CF(0) - the membrane proton channel. CF(1) has five subunits: alpha(3), beta(3), gamma(1), delta(1), epsilon(1). CF(0) has four main subunits: a(1), b(1), b'(1) and c(9-12).

The protein resides in the plastid. It is found in the chloroplast thylakoid membrane. It carries out the reaction ATP + H2O + 4 H(+)(in) = ADP + phosphate + 5 H(+)(out). Its function is as follows. Produces ATP from ADP in the presence of a proton gradient across the membrane. The catalytic sites are hosted primarily by the beta subunits. This is ATP synthase subunit beta, chloroplastic from Nicotiana tabacum (Common tobacco).